Here is a 286-residue protein sequence, read N- to C-terminus: Main hemagglutinin component type C (286 aa).

One copy of the 1-alpha repeat lies at 2–55 (SQTNANDLRNNEVFFISPSNNTNKVLDKISQSEVKLWNKLSGANQKWRLIYDTN). 2 consecutive Ricin B-type lectin domains span residues 12–140 (NEVF…FKFS) and 180–284 (DSSR…WIIN). The 1-beta repeat unit spans residues 56-100 (KQAYKIKVMDNTSLILTWNAPLSSVSVKTDTNGDNQYWYLLQNYI). A 1-gamma repeat occupies 101–148 (SRNVIIRNYMNPNLVLQYNIDDTLMVSTQTSSSNQFFKFSNCIYEALN). The 2-alpha repeat unit spans residues 149–193 (NRNCKLQTQLNSDRFLSKNLNSQIIVLWQWFDSSRQKWIIEYNET). Residues 167–183 (NLNSQIIVLWQWFDSSR) form a sugar-binding site 1 region. A 2-beta repeat occupies 194–239 (KSAYTLKCQENNRYLTWIQNSNNYVETYQSTDSLIQYWNINYLDND). One copy of the 2-gamma repeat lies at 240 to 286 (ASKYILYNLQDTNRVLDVYNSQIANGTHVIVDSYHGNTNQQWIINLI). Residues 256–279 (DVYNSQIANGTHVIVDSYHGNTNQ) are sugar-binding site 2.

In terms of assembly, botulinum toxins are produced as progenitor toxins of large molecular sizes of 12S (M toxin) and 16S (L toxin). M toxin consists of a non-toxic, non-hemagglutinin component (NTNHA) and the neurotoxin. L toxin consists of the M toxin and the 3 subcomponents of hemagglutinin (HA). HA is composed of subcomponents of 70, 33, and 17 kDa. The 70 kDa subcomponent undergoes proteolytic processing and is split into HA-55 (also called HA-53 and HA3b) and HA-22-23 (also called HA3a). The stoichiometry of the whole complex has been modeled as one BoNT/C, one NTNHA, three HA-70, six HA-33 and three HA-17.

It is found in the secreted. Agglutinates human erythrocytes. The hemagglutinin (HA) component of the progenitor toxin protects the structural integrity of botulinum neurotoxin; may increase internalization of the neurotoxin into the bloodstream of the host. The hemagglutinin (HA) component is involved in binding to the upper small intestine through interactions with glycolipids and glycoproteins containing sialic acid moieties. Binds galactose or oligosaccharides with galactose at their non-reducing end. Binds eukaryotic host mucins; binding is inhibited by N-acetyl-beta-neuraminic acid, N-acetyl-D-galactosamine, galactose, and methyl N-acetyl-beta-neuraminic acid. Binds N-acetyl-beta-neuraminic acid, N-acetyl-D-galactosamine and galactose (but not glucose) via 2 sites. The polypeptide is Main hemagglutinin component type C (Clostridium botulinum C (Clostridium botulinum C bacteriophage)).